Reading from the N-terminus, the 506-residue chain is MKEYRVYLERARSRQQDFLYPLIFREYIYGLAYSHNFNRSIFVENGGYDNKYTLLNVKRLITRMYQQNHLIISANDSNKNPFLGYNKNFYSQIISEGFAIVVEIPFFLQLSSSLEEAEIIKSYKNVRSIHSVFPFLEDKFTYLNYVSDIRIPYPIHLEILVQILRYWVKDVPFFHLLRLFLYHFCNWNCFIPTKKSISTFSKSNPRLFLFLYNFYVCEYESIFLFLRNKSYHLRLKSFSVFFERNFFYAKREHLVEVFSKDFSYTLPFFKDPNIHYVRYQGKCILASKNVPFLMNKWKYYFIHLWQCFFDVWSQPRTININQLSEHSFQLLGYFSNVRLNRSVVRSQMLQNTFLIEIVSKKLDIIVPIIPLIRSLAKAKFCNVLGHPISKPVWADSSDFDIIERFLRICRNLSHYYNGSSKKKSLYRIKYILRLSCIKTLACKHKSTVRAFLKRSGSEELLEEFFTEEEEILSLIFPRDSFTLHRFHRNRIWYLDILFSNDLVNDE.

The protein belongs to the intron maturase 2 family. MatK subfamily.

Its subcellular location is the plastid. It is found in the chloroplast. In terms of biological role, usually encoded in the trnK tRNA gene intron. Probably assists in splicing its own and other chloroplast group II introns. This chain is Maturase K, found in Trifolium wormskioldii (Cows clover).